The following is a 399-amino-acid chain: Homeobox protein ceh-39 (399 aa).

Disordered regions lie at residues 32–91 and 158–187; these read PEPA…GDTE and AKKSRGRTAPRTPKSLETSKPGRGVKRPAS. The segment covering 60–79 has biased composition (low complexity); sequence SSMCGSSSSSSSSSYSSGSS. Positions 205-291 form a DNA-binding region, CUT; it reads NRQIGDDEEL…VRRALCFMKK (87 aa). A DNA-binding region (homeobox) is located at residues 315–374; sequence SDERIRRFTFTQTQLDSLHTVFQQQDRPNREMQQALSATLKLNRSTVGNFFMNARRRLPK.

The protein belongs to the CUT homeobox family. In terms of tissue distribution, expressed in hermaphrodite gonads.

It is found in the nucleus. It localises to the chromosome. In terms of biological role, transcriptional regulator which is involved in the sex determination and X chromosome dosage compensation pathways. Directly binds to 5'-ATTGAT-3' sites in the promoter of sex-determining factor xol-1 to negatively regulate its expression and promote hermaphrodite development. Associates with condensed DNA during mitosis. The protein is Homeobox protein ceh-39 of Caenorhabditis elegans.